We begin with the raw amino-acid sequence, 818 residues long: Sodium/hydrogen exchanger 1 (818 aa).

Residues 1 to 98 (MLLWSGICGL…FPVLGIDYTH (98 aa)) lie on the Extracellular side of the membrane. Residues 39 to 76 (PSPTASTIRGSEPPRERSIGDVTTAPPELAPESRPVNH) are disordered. Asparagine 75 is a glycosylation site (N-linked (GlcNAc...) asparagine). The chain crosses the membrane as a helical span at residues 99 to 121 (VRTPFEISLWILLACLMKIGFHV). Residues 122–130 (IPTISSIVP) are Cytoplasmic-facing. Residues 131-148 (ESCLLIVVGLLVGGLIKA) traverse the membrane as a helical segment. At 149-158 (VGETPPFLQS) the chain is on the extracellular side. The helical transmembrane segment at 159–176 (EVFFLFLLPPIILDAGYF) threads the bilayer. Residues 177-186 (LPLRQFTENL) are Cytoplasmic-facing. Residues 187–215 (GTILIFAVVGTLWNAFFLGGLMYAVCLVG) traverse the membrane as a helical segment. Residues 216-222 (GEQINNI) are Extracellular-facing. The chain crosses the membrane as a helical span at residues 223–249 (GLLDNLLFGSIISAVDPVAVLAVFEEI). At 250 to 252 (HIN) the chain is on the cytoplasmic side. Residues 253-283 (ELLHILVFGESLLNDAVTVVLYHLFEEFANY) form a helical membrane-spanning segment. The Extracellular portion of the chain corresponds to 284-287 (DRVG). The chain crosses the membrane as a helical span at residues 288 to 322 (IVDIVLGFLSFFVVSLGGVFVGVVYGVIAAFTSRF). Topologically, residues 323 to 328 (TSHIRV) are cytoplasmic. A helical membrane pass occupies residues 329-341 (IEPLFVFLYSYMA). The Extracellular segment spans residues 342-350 (YLSAELFHL). A helical membrane pass occupies residues 351-371 (SGIMALIASGVVMRPYVEANI). Residues 372-373 (SH) lie on the Cytoplasmic side of the membrane. A helical membrane pass occupies residues 374–404 (KSHTTIKYFLKMWSSVSETLIFIFLGVSTVA). Residues 405–410 (GSHHWN) are Extracellular-facing. A helical membrane pass occupies residues 411–438 (WTFVISTLLFCLIARVLGVLGLTWFINK). Over 439 to 444 (FRIVKL) the chain is Cytoplasmic. The chain crosses the membrane as a helical span at residues 445 to 469 (TPKDQFIIAYGGLRGAIAFSLGHLL). Topologically, residues 470–475 (DKNHFP) are extracellular. Residues 476–505 (MCDLFLTAIITVIFFTVFVQGMTIRPLVDL) traverse the membrane as a helical segment. The tract at residues 503–545 (VDLLAVKKKQETKRSINEEIHTQFLDHLLTGIEDICGHYGHHH) is interaction with TESC. At 506–818 (LAVKKKQETK…EGEPFIPKGQ (313 aa)) the chain is on the cytoplasmic side. The PI(4,5)P2-binding region stretch occupies residues 509–516 (KKKQETKR). The tract at residues 515 to 545 (KRSINEEIHTQFLDHLLTGIEDICGHYGHHH) is interaction with CHP2. Residues 540–545 (HYGHHH) are confers pH-dependent PI(4,5)P2 binding. Positions 552–560 (RFNKKYVKK) are PI(4,5)P2-binding region. Phosphoserine occurs at positions 599 and 602. Threonine 603 is subject to Phosphothreonine. Residues serine 605 and serine 648 each carry the phosphoserine modification. The interaction with TESC stretch occupies residues 633–818 (KILRNNLQKT…EGEPFIPKGQ (186 aa)). The interaction with CALM1 stretch occupies residues 633-818 (KILRNNLQKT…EGEPFIPKGQ (186 aa)). Residues 684–687 (LTVP) form an interaction with PPP3CA region. Phosphoserine occurs at positions 693, 697, and 703. An interaction with PPP3CA region spans residues 715 to 720 (PVITID). 3 positions are modified to phosphoserine: serine 723, serine 726, and serine 729. The disordered stretch occupies residues 739–818 (GKVLGLSREP…EGEPFIPKGQ (80 aa)). Phosphothreonine is present on residues threonine 752 and threonine 782. Over residues 785 to 794 (PSDSPSSQRI) the composition is skewed to polar residues. 3 positions are modified to phosphoserine: serine 788, serine 790, and serine 799.

It belongs to the monovalent cation:proton antiporter 1 (CPA1) transporter (TC 2.A.36) family. In terms of assembly, homodimer; dimerization is crucial for its function. Oligomer. Interacts with CALM in a calcium-dependent manner. Interacts with TESC. Interacts (via the juxtamembrane region of the cytoplasmic C-terminal domain) with CHP1; the interaction occurs at the plasma membrane in a calcium-dependent manner. Interacts with CHP2; the interaction occurs in a calcium-dependent manner. Interacts with EZR; regulates the cytoskeletal interactions of SLC9A1 and promotes stress fiber formation. Ubiquitinated, leading to its degradation by the proteasome. Ubiquitination is reduced by CHP1. Post-translationally, O-glycosylated. In terms of processing, palmitoylated; may play a major role in SLC9A1 regulation. Phosphorylation at Thr-782 increases SLC9A1 activity. Specifically dephosphorylated at Thr-782 by PPP3CA that negatively regulates SLC9A1 activity. Phosphorylation at Ser-648 by AKT1 reduces SLC9A1 binding to CALM1.

The protein resides in the cell membrane. The protein localises to the basolateral cell membrane. The enzyme catalyses Na(+)(in) + H(+)(out) = Na(+)(out) + H(+)(in). It carries out the reaction Li(+)(out) + H(+)(in) = Li(+)(in) + H(+)(out). The catalysed reaction is Li(+)(in) + Na(+)(out) = Li(+)(out) + Na(+)(in). With respect to regulation, activated at acidic pHs. Inhibited by cariporide and eniporide. Inhibited by amiloride and 5-amino-substituted derivatives. Phosphatidylinositol 4,5-bisphosphate (PI(4,5)P2) and phosphatidylinositol 3,4,5-trisphosphate (PI(3,4,5)P3) bind and differentially regulate SLC9A1 activity. Functionally, electroneutral Na(+) /H(+) antiporter that extrudes Na(+) in exchange for external protons driven by the inward sodium ion chemical gradient, protecting cells from acidification that occurs from metabolism. Exchanges intracellular H(+) ions for extracellular Na(+) in 1:1 stoichiometry. Plays a key role in maintening intracellular pH neutral and cell volume, and thus is important for cell growth, proliferation, migration and survival. In addition, can transport lithium Li(+) and also functions as a Na(+)/Li(+) antiporter. SLC9A1 also functions in membrane anchoring and organization of scaffolding complexes that coordinate signaling inputs. The polypeptide is Sodium/hydrogen exchanger 1 (SLC9A1) (Sus scrofa (Pig)).